A 393-amino-acid chain; its full sequence is Sister chromatid cohesion protein DCC1 (393 aa).

It belongs to the DCC1 family. Component of the CTF18-RFC complex which consists of CTF8, CTF18, DSCC1 and the RFC complex. Interacts with CTF8 and CTF18. Interacts with DDX11.

It is found in the nucleus. Functionally, loads PCNA onto primed templates regulating velocity, spacing and restart activity of replication forks. May couple DNA replication to sister chromatid cohesion through regulation of the acetylation of the cohesin subunit SMC3. This is Sister chromatid cohesion protein DCC1 (DSCC1) from Homo sapiens (Human).